The chain runs to 296 residues: Complex I intermediate-associated protein 30, mitochondrial (296 aa).

The transit peptide at 1–29 (MNSLLRQGLRLGCCLPAVQQQIHTTAVHR) directs the protein to the mitochondrion.

It belongs to the CIA30 family. Associates with mitochondrial complex I assembly intermediates during its biogenesis.

The protein localises to the mitochondrion. Chaperone protein involved in the assembly of the mitochondrial NADH:ubiquinone oxidoreductase complex (complex I). In Drosophila melanogaster (Fruit fly), this protein is Complex I intermediate-associated protein 30, mitochondrial.